A 218-amino-acid chain; its full sequence is Thiopurine S-methyltransferase (218 aa).

Residues Trp10, Leu45, Glu66, and Arg123 each coordinate S-adenosyl-L-methionine.

It belongs to the class I-like SAM-binding methyltransferase superfamily. TPMT family.

Its subcellular location is the cytoplasm. It carries out the reaction S-adenosyl-L-methionine + a thiopurine = S-adenosyl-L-homocysteine + a thiopurine S-methylether.. In Xanthomonas campestris pv. campestris (strain 8004), this protein is Thiopurine S-methyltransferase.